The following is a 33-amino-acid chain: Fatty acid-binding protein, intestinal (33 aa).

This sequence belongs to the calycin superfamily. Fatty-acid binding protein (FABP) family. Intestine.

The protein resides in the cytoplasm. Its function is as follows. FABPs are thought to play a role in the intracellular transport of long-chain fatty acids and their acyl-CoA esters. The protein is Fatty acid-binding protein, intestinal (fabp2) of Rhamdia sapo (South American catfish).